The sequence spans 343 residues: Heat-inducible transcription repressor HrcA (343 aa).

It belongs to the HrcA family.

Negative regulator of class I heat shock genes (grpE-dnaK-dnaJ and groELS operons). Prevents heat-shock induction of these operons. The sequence is that of Heat-inducible transcription repressor HrcA from Mycobacterium tuberculosis (strain ATCC 25177 / H37Ra).